We begin with the raw amino-acid sequence, 2344 residues long: Peroxide stress-activated histidine kinase mak3 (2344 aa).

The Protein kinase domain occupies 1-295 (MYSQHELRNK…GIVNDLEACL (295 aa)). Phosphoserine occurs at positions 12, 16, and 17. The span at 486-503 (SGNTRKTSLLGSNHSSYS) shows a compositional bias: polar residues. The tract at residues 486–506 (SGNTRKTSLLGSNHSSYSDKL) is disordered. 2 TPR repeats span residues 829 to 862 (CHYL…IPHE) and 1340 to 1373 (AFAF…YAAL). The PAC domain occupies 1730–1781 (FELEIRIKRKDGVYRWNLTRCTPTTNEKNRTSFLCATIDIDDQKKARATALE). Residues 1792-2018 (NISHELRTPF…TFKICYDLKI (227 aa)) form the Histidine kinase domain. At His1795 the chain carries Phosphohistidine; by autocatalysis. The region spanning 2211–2333 (KILIAEDNPI…TLIKMLLQYL (123 aa)) is the Response regulatory domain. A 4-aspartylphosphate modification is found at Asp2263.

The protein resides in the cytoplasm. It catalyses the reaction ATP + protein L-histidine = ADP + protein N-phospho-L-histidine.. Functionally, involved in the control of the SAPK-dependent transcriptional response to peroxide stress. Regulates sty1 activity. In Schizosaccharomyces pombe (strain 972 / ATCC 24843) (Fission yeast), this protein is Peroxide stress-activated histidine kinase mak3 (mak3).